The following is a 395-amino-acid chain: Chorismate synthase (395 aa).

The NADP(+) site is built by Arg40 and Arg46. Residues 135-137 (RAS) and 256-257 (QA) contribute to the FMN site. Positions 272–283 (RRGSQAHDEMRP) are enriched in basic and acidic residues. Positions 272-296 (RRGSQAHDEMRPGPDGILRSTNRAG) are disordered. FMN-binding positions include Gly300, 315 to 319 (KPIST), and Arg341.

Belongs to the chorismate synthase family. In terms of assembly, homotetramer. Requires FMNH2 as cofactor.

The catalysed reaction is 5-O-(1-carboxyvinyl)-3-phosphoshikimate = chorismate + phosphate. It participates in metabolic intermediate biosynthesis; chorismate biosynthesis; chorismate from D-erythrose 4-phosphate and phosphoenolpyruvate: step 7/7. Its function is as follows. Catalyzes the anti-1,4-elimination of the C-3 phosphate and the C-6 proR hydrogen from 5-enolpyruvylshikimate-3-phosphate (EPSP) to yield chorismate, which is the branch point compound that serves as the starting substrate for the three terminal pathways of aromatic amino acid biosynthesis. This reaction introduces a second double bond into the aromatic ring system. In Rhodococcus opacus (strain B4), this protein is Chorismate synthase.